The following is a 942-amino-acid chain: Leucine--tRNA ligase (942 aa).

Residues 41-51 carry the 'HIGH' region motif; that stretch reads PYLNGVLHAGH. Positions 633–637 match the 'KMSKS' region motif; that stretch reads KLSKS. Lysine 636 contacts ATP.

It belongs to the class-I aminoacyl-tRNA synthetase family.

Its subcellular location is the cytoplasm. The catalysed reaction is tRNA(Leu) + L-leucine + ATP = L-leucyl-tRNA(Leu) + AMP + diphosphate. The sequence is that of Leucine--tRNA ligase from Methanocaldococcus jannaschii (strain ATCC 43067 / DSM 2661 / JAL-1 / JCM 10045 / NBRC 100440) (Methanococcus jannaschii).